Consider the following 94-residue polypeptide: Pyrimidine/purine nucleoside phosphorylase (94 aa).

Belongs to the nucleoside phosphorylase PpnP family.

The enzyme catalyses a purine D-ribonucleoside + phosphate = a purine nucleobase + alpha-D-ribose 1-phosphate. The catalysed reaction is adenosine + phosphate = alpha-D-ribose 1-phosphate + adenine. It catalyses the reaction cytidine + phosphate = cytosine + alpha-D-ribose 1-phosphate. It carries out the reaction guanosine + phosphate = alpha-D-ribose 1-phosphate + guanine. The enzyme catalyses inosine + phosphate = alpha-D-ribose 1-phosphate + hypoxanthine. The catalysed reaction is thymidine + phosphate = 2-deoxy-alpha-D-ribose 1-phosphate + thymine. It catalyses the reaction uridine + phosphate = alpha-D-ribose 1-phosphate + uracil. It carries out the reaction xanthosine + phosphate = alpha-D-ribose 1-phosphate + xanthine. Functionally, catalyzes the phosphorolysis of diverse nucleosides, yielding D-ribose 1-phosphate and the respective free bases. Can use uridine, adenosine, guanosine, cytidine, thymidine, inosine and xanthosine as substrates. Also catalyzes the reverse reactions. The sequence is that of Pyrimidine/purine nucleoside phosphorylase from Shigella dysenteriae serotype 1 (strain Sd197).